Consider the following 391-residue polypeptide: Oocyte zinc finger protein XlCOF7.2 (391 aa).

4 consecutive C2H2-type zinc fingers follow at residues 284 to 306 (FPCS…YRTH), 312 to 334 (YPCS…RRIH), 340 to 362 (SSCS…HRTH), and 368 to 391 (YSCS…RRTH).

Belongs to the krueppel C2H2-type zinc-finger protein family.

Its subcellular location is the nucleus. May be involved in transcriptional regulation. The sequence is that of Oocyte zinc finger protein XlCOF7.2 from Xenopus laevis (African clawed frog).